The primary structure comprises 366 residues: S-adenosylmethionine:tRNA ribosyltransferase-isomerase (366 aa).

This sequence belongs to the QueA family. In terms of assembly, monomer.

It is found in the cytoplasm. It carries out the reaction 7-aminomethyl-7-carbaguanosine(34) in tRNA + S-adenosyl-L-methionine = epoxyqueuosine(34) in tRNA + adenine + L-methionine + 2 H(+). Its pathway is tRNA modification; tRNA-queuosine biosynthesis. Functionally, transfers and isomerizes the ribose moiety from AdoMet to the 7-aminomethyl group of 7-deazaguanine (preQ1-tRNA) to give epoxyqueuosine (oQ-tRNA). The sequence is that of S-adenosylmethionine:tRNA ribosyltransferase-isomerase from Synechococcus sp. (strain CC9605).